Reading from the N-terminus, the 148-residue chain is CASP-like protein 1 (148 aa).

3 helical membrane passes run 31 to 51 (FIYFVAAFSVAGLYSIITSLL), 74 to 94 (VLLLGIVAAAIGAAGGVGYIG), and 121 to 141 (IAAGLIASIVLVLLILLSFFT).

The protein belongs to the Casparian strip membrane proteins (CASP) family. In terms of assembly, homodimer and heterodimers.

Its subcellular location is the cell membrane. The chain is CASP-like protein 1 from Panax ginseng (Korean ginseng).